Here is a 200-residue protein sequence, read N- to C-terminus: Ribonuclease HII (200 aa).

Positions 9–198 constitute an RNase H type-2 domain; the sequence is ALIAGVDEVG…VQRVLAQAKG (190 aa). The a divalent metal cation site is built by Asp-15, Glu-16, and Asp-107.

The protein belongs to the RNase HII family. Mn(2+) serves as cofactor. It depends on Mg(2+) as a cofactor.

The protein localises to the cytoplasm. The enzyme catalyses Endonucleolytic cleavage to 5'-phosphomonoester.. In terms of biological role, endonuclease that specifically degrades the RNA of RNA-DNA hybrids. This chain is Ribonuclease HII, found in Pseudoalteromonas translucida (strain TAC 125).